We begin with the raw amino-acid sequence, 461 residues long: L-seryl-tRNA(Sec) selenium transferase (461 aa).

K291 is subject to N6-(pyridoxal phosphate)lysine.

Belongs to the SelA family. Requires pyridoxal 5'-phosphate as cofactor.

The protein resides in the cytoplasm. The catalysed reaction is L-seryl-tRNA(Sec) + selenophosphate + H(+) = L-selenocysteinyl-tRNA(Sec) + phosphate. It functions in the pathway aminoacyl-tRNA biosynthesis; selenocysteinyl-tRNA(Sec) biosynthesis; selenocysteinyl-tRNA(Sec) from L-seryl-tRNA(Sec) (bacterial route): step 1/1. Converts seryl-tRNA(Sec) to selenocysteinyl-tRNA(Sec) required for selenoprotein biosynthesis. The chain is L-seryl-tRNA(Sec) selenium transferase from Caldanaerobacter subterraneus subsp. tengcongensis (strain DSM 15242 / JCM 11007 / NBRC 100824 / MB4) (Thermoanaerobacter tengcongensis).